The primary structure comprises 447 residues: Dihydroorotase (447 aa).

Zn(2+)-binding residues include histidine 81 and histidine 83. Residues 83–85 (HFR) and asparagine 115 contribute to the substrate site. Zn(2+)-binding residues include aspartate 171, histidine 198, and histidine 252. Asparagine 298 contacts substrate. Position 325 (aspartate 325) interacts with Zn(2+). Residue aspartate 325 is part of the active site. Substrate-binding positions include histidine 329 and 343–344 (FG).

The protein belongs to the metallo-dependent hydrolases superfamily. DHOase family. Class I DHOase subfamily. It depends on Zn(2+) as a cofactor.

It catalyses the reaction (S)-dihydroorotate + H2O = N-carbamoyl-L-aspartate + H(+). Its pathway is pyrimidine metabolism; UMP biosynthesis via de novo pathway; (S)-dihydroorotate from bicarbonate: step 3/3. Its function is as follows. Catalyzes the reversible cyclization of carbamoyl aspartate to dihydroorotate. The protein is Dihydroorotase of Ehrlichia canis (strain Jake).